A 331-amino-acid polypeptide reads, in one-letter code: MPTNSNHQHHLQHQLNENGSIISGHGLVLSHQLPPLQANPNPNHHHVATSAGLPSRMGGSMAERARQANIPPLAGPLKCPRCDSSNTKFCYYNNYNLTQPRHFCKGCRRYWTQGGALRNVPVGGGCRRNNKKGKNGNLKSSSSSSKQSSSVNAQSPSSGQLRTNHQFPFSPTLYNLTQLGGIGLNLAATNGNNQAHQIGSSLMMSDLGFLHGRNTSTPMTGNIHENNNNNNNENNLMASVGSLSPFALFDPTTGLYAFQNDGNIGNNVGISGSSTSMVDSRVYQTPPVKMEEQPNLANLSRPVSGLTSPGNQTNQYFWPGSDFSGPSNDLL.

The segment at 77 to 131 (LKCPRCDSSNTKFCYYNNYNLTQPRHFCKGCRRYWTQGGALRNVPVGGGCRRNNK) adopts a Dof-type zinc-finger fold. The Zn(2+) site is built by C79, C82, C104, and C107. Disordered regions lie at residues 121-166 (PVGG…TNHQ) and 291-331 (EEQP…NDLL). The segment covering 135–160 (NGNLKSSSSSSKQSSSVNAQSPSSGQ) has biased composition (low complexity). The span at 305–316 (GLTSPGNQTNQY) shows a compositional bias: polar residues.

As to quaternary structure, interacts with OBF4. Expressed in the vasculature (mainly in the phloem and associated cell files) of cotyledons, leaves, roots, flower stalks and petals. The PEAR proteins (e.g. DOF2.4, DOF5.1, DOF3.2, DOF1.1, DOF5.6 and DOF5.3) form a short-range concentration gradient that peaks at protophloem sieve elements (PSE).

It localises to the nucleus. Transcription factor that binds specifically to a 5'-AA[AG]G-3' consensus core sequence. Enhances the DNA binding of OBF transcription factors to OCS elements. Involved in the regulation of root development. The PEAR proteins (e.g. DOF2.4, DOF5.1, DOF3.2, DOF1.1, DOF5.6 and DOF5.3) activate gene expression that promotes radial growth of protophloem sieve elements. Element of a regulatory network controlling indole glucosinolates (IGS) biosynthesis, probably by inducing the expression of accurate genes (e.g. CYP83B1). Promotes apical dominance. In Arabidopsis thaliana (Mouse-ear cress), this protein is Dof zinc finger protein DOF1.1.